Here is a 383-residue protein sequence, read N- to C-terminus: Cell division protein FtsZ (383 aa).

Residues 20-24 (GGGGN), 107-109 (GTG), glutamate 138, arginine 142, and asparagine 186 contribute to the GTP site.

It belongs to the FtsZ family. As to quaternary structure, homodimer. Polymerizes to form a dynamic ring structure in a strictly GTP-dependent manner. Interacts directly with several other division proteins.

It is found in the cytoplasm. Functionally, essential cell division protein that forms a contractile ring structure (Z ring) at the future cell division site. The regulation of the ring assembly controls the timing and the location of cell division. One of the functions of the FtsZ ring is to recruit other cell division proteins to the septum to produce a new cell wall between the dividing cells. Binds GTP and shows GTPase activity. The chain is Cell division protein FtsZ from Shigella flexneri.